The sequence spans 164 residues: Disulfide bond formation protein B (164 aa).

Residues 1–9 are Cytoplasmic-facing; sequence MTLPSARTC. Residues 10 to 26 traverse the membrane as a helical segment; the sequence is FLLGFLFCAALLAAALY. At 27–44 the chain is on the periplasmic side; that stretch reads FQFSGGLEPCPLCISQRI. C36 and C39 are disulfide-bonded. The helical transmembrane segment at 45-61 threads the bilayer; it reads MVLAVALVFLAAAIHHP. Residues 62–68 are Cytoplasmic-facing; that stretch reads ASLGIRA. Residues 69 to 85 traverse the membrane as a helical segment; it reads YALLGTAVALGGASISG. Topologically, residues 86-142 are periplasmic; the sequence is RHVWLLHLPPEEVPECGPGLSYMFRNFPLGDTLKAMLSGTGDCAKVDWTFLGLSMPA. A disulfide bridge links C101 with C128. A helical membrane pass occupies residues 143 to 161; sequence WVLICFLGLGAFSLLQWWN. The Cytoplasmic portion of the chain corresponds to 162-164; that stretch reads AER.

This sequence belongs to the DsbB family.

The protein resides in the cell inner membrane. Its function is as follows. Required for disulfide bond formation in some periplasmic proteins. Acts by oxidizing the DsbA protein. This chain is Disulfide bond formation protein B, found in Methylococcus capsulatus (strain ATCC 33009 / NCIMB 11132 / Bath).